Consider the following 140-residue polypeptide: Nucleoside diphosphate kinase (140 aa).

Lys11, Phe59, Arg87, Thr93, Arg104, and Asn114 together coordinate ATP. The Pros-phosphohistidine intermediate role is filled by His117.

Belongs to the NDK family. In terms of assembly, homotetramer. Requires Mg(2+) as cofactor.

It localises to the cytoplasm. It catalyses the reaction a 2'-deoxyribonucleoside 5'-diphosphate + ATP = a 2'-deoxyribonucleoside 5'-triphosphate + ADP. The enzyme catalyses a ribonucleoside 5'-diphosphate + ATP = a ribonucleoside 5'-triphosphate + ADP. Major role in the synthesis of nucleoside triphosphates other than ATP. The ATP gamma phosphate is transferred to the NDP beta phosphate via a ping-pong mechanism, using a phosphorylated active-site intermediate. This Methylobacterium nodulans (strain LMG 21967 / CNCM I-2342 / ORS 2060) protein is Nucleoside diphosphate kinase.